The sequence spans 73 residues: Translation initiation factor IF-1 (73 aa).

The S1-like domain occupies 1–73 (MAKKDGVIEI…NRGRIVYRYR (73 aa)).

This sequence belongs to the IF-1 family. As to quaternary structure, component of the 30S ribosomal translation pre-initiation complex which assembles on the 30S ribosome in the order IF-2 and IF-3, IF-1 and N-formylmethionyl-tRNA(fMet); mRNA recruitment can occur at any time during PIC assembly.

It localises to the cytoplasm. Functionally, one of the essential components for the initiation of protein synthesis. Stabilizes the binding of IF-2 and IF-3 on the 30S subunit to which N-formylmethionyl-tRNA(fMet) subsequently binds. Helps modulate mRNA selection, yielding the 30S pre-initiation complex (PIC). Upon addition of the 50S ribosomal subunit IF-1, IF-2 and IF-3 are released leaving the mature 70S translation initiation complex. In Acidothermus cellulolyticus (strain ATCC 43068 / DSM 8971 / 11B), this protein is Translation initiation factor IF-1.